The sequence spans 83 residues: Small ribosomal subunit protein uS17 (83 aa).

The protein belongs to the universal ribosomal protein uS17 family. As to quaternary structure, part of the 30S ribosomal subunit.

Its function is as follows. One of the primary rRNA binding proteins, it binds specifically to the 5'-end of 16S ribosomal RNA. The polypeptide is Small ribosomal subunit protein uS17 (Chlamydia muridarum (strain MoPn / Nigg)).